The following is a 906-amino-acid chain: Protein translocase subunit SecA (906 aa).

ATP contacts are provided by residues glutamine 86, 104–108 (GEGKT), and aspartate 499. Residues 863 to 885 (PVVSRIDPKDRNPDDPTSWGRVS) are disordered. The Zn(2+) site is built by cysteine 890, cysteine 892, cysteine 901, and histidine 902.

Belongs to the SecA family. Monomer and homodimer. Part of the essential Sec protein translocation apparatus which comprises SecA, SecYEG and auxiliary proteins SecDF-YajC and YidC. The cofactor is Zn(2+).

The protein resides in the cell inner membrane. It is found in the cytoplasm. It catalyses the reaction ATP + H2O + cellular proteinSide 1 = ADP + phosphate + cellular proteinSide 2.. Part of the Sec protein translocase complex. Interacts with the SecYEG preprotein conducting channel. Has a central role in coupling the hydrolysis of ATP to the transfer of proteins into and across the cell membrane, serving both as a receptor for the preprotein-SecB complex and as an ATP-driven molecular motor driving the stepwise translocation of polypeptide chains across the membrane. This chain is Protein translocase subunit SecA, found in Rickettsia akari (strain Hartford).